Here is a 499-residue protein sequence, read N- to C-terminus: MKRSISIFITCLLITLLTMGGMLASPASAAGTKTPVAKNGQLSIKGTQLVNRDGKAVQLKGISSHGLQWYGEYVNKDSLKWLRDDWGITVFRAAMYTADGGIIDNPSVKNKMKEAVEAAKELGIYVIIDWHILNDGNPNQNKEKAKEFFKEMSSLYGNTPNVIYEIANEPNGDVNWKRDIKPYAEEVISVIRKNDPDNIIIVGTGTWSQDVNDAADDQLKDANVMDALHFYAGTHGQFLRDKANYALSKGAPIFVTEWGTSDASGNGGVFLDQSREWLKYLDSKTISWVNWNLSDKQESSSALKPGASKTGGWRLSDLSASGTFVRENILGTKDSTKDIPETPAKDKPTQENGISVQYRAGDGSMNSNQIRPQLQIKNNGNTTVDLKDVTARYWYNAKNKGQNVDCDYAQLGCGNVTYKFVTLHKPKQGADTYLELGFKNGTLAPGASTGNIQLRLHNDDWSNYAQSGDYSFFKSNTFKTTKKITLYDQGKLIWGTEPN.

Residues 1–29 (MKRSISIFITCLLITLLTMGGMLASPASA) form the signal peptide. Substrate is bound by residues histidine 65, 69–70 (WY), tyrosine 96, and histidine 131. Glutamate 169 acts as the Proton donor in catalysis. Residue tyrosine 231 participates in substrate binding. The active-site Nucleophile is glutamate 257. Residues 263–264 (AS), tryptophan 291, and 296–298 (KQE) each bind substrate. Residues 350–499 (QENGISVQYR…GKLIWGTEPN (150 aa)) enclose the CBM3 domain.

This sequence belongs to the glycosyl hydrolase 5 (cellulase A) family.

It carries out the reaction Endohydrolysis of (1-&gt;4)-beta-D-glucosidic linkages in cellulose, lichenin and cereal beta-D-glucans.. This Bacillus subtilis protein is Endoglucanase (bglC).